Here is a 212-residue protein sequence, read N- to C-terminus: Adenylate kinase (212 aa).

10–15 is a binding site for ATP; the sequence is GAGKGT. The interval 30–59 is NMP; sequence STGDMFRAAMANQTEMGRLAKSYIDKGELV. AMP is bound by residues Thr-31, Arg-36, 57–59, 86–89, and Gln-93; these read ELV and GYPR. Residues 127-159 form an LID region; that stretch reads GRIINRKTGETFHKVFNPPVDYKEEDYYQREDD. Residues Arg-128 and 137–138 contribute to the ATP site; that span reads TF. AMP contacts are provided by Arg-156 and Arg-167. Gln-195 serves as a coordination point for ATP.

Belongs to the adenylate kinase family. As to quaternary structure, monomer.

The protein localises to the cytoplasm. It catalyses the reaction AMP + ATP = 2 ADP. It participates in purine metabolism; AMP biosynthesis via salvage pathway; AMP from ADP: step 1/1. Functionally, catalyzes the reversible transfer of the terminal phosphate group between ATP and AMP. Plays an important role in cellular energy homeostasis and in adenine nucleotide metabolism. The chain is Adenylate kinase from Streptococcus agalactiae serotype Ia (strain ATCC 27591 / A909 / CDC SS700).